The chain runs to 504 residues: Arabinose import ATP-binding protein AraG (504 aa).

ABC transporter domains lie at 8-243 and 256-499; these read LSFR…MVGR and YGEE…MPKV. 40–47 serves as a coordination point for ATP; it reads GENGAGKS.

The protein belongs to the ABC transporter superfamily. Arabinose importer (TC 3.A.1.2.2) family. In terms of assembly, the complex is composed of two ATP-binding proteins (AraG), two transmembrane proteins (AraH) and a solute-binding protein (AraF).

The protein resides in the cell inner membrane. The enzyme catalyses L-arabinose(out) + ATP + H2O = L-arabinose(in) + ADP + phosphate + H(+). Its function is as follows. Part of the ABC transporter complex AraFGH involved in arabinose import. Responsible for energy coupling to the transport system. This Escherichia coli (strain UTI89 / UPEC) protein is Arabinose import ATP-binding protein AraG.